The sequence spans 320 residues: o-succinylbenzoate synthase (320 aa).

Catalysis depends on Lys-133, which acts as the Proton donor. Mg(2+)-binding residues include Asp-161, Glu-190, and Asp-213. Lys-235 serves as the catalytic Proton acceptor.

It belongs to the mandelate racemase/muconate lactonizing enzyme family. MenC type 1 subfamily. Requires a divalent metal cation as cofactor.

It catalyses the reaction (1R,6R)-6-hydroxy-2-succinyl-cyclohexa-2,4-diene-1-carboxylate = 2-succinylbenzoate + H2O. It participates in quinol/quinone metabolism; 1,4-dihydroxy-2-naphthoate biosynthesis; 1,4-dihydroxy-2-naphthoate from chorismate: step 4/7. The protein operates within quinol/quinone metabolism; menaquinone biosynthesis. Converts 2-succinyl-6-hydroxy-2,4-cyclohexadiene-1-carboxylate (SHCHC) to 2-succinylbenzoate (OSB). The sequence is that of o-succinylbenzoate synthase from Escherichia coli O6:K15:H31 (strain 536 / UPEC).